The sequence spans 147 residues: Cytochrome c' (147 aa).

Positions 1–21 (MKRMMIVAALAALTTTTVAQA) are cleaved as a signal peptide. The heme c site is built by Arg31, Thr87, Glu88, Cys137, Cys140, and His141.

In terms of assembly, homodimer. Binds 1 heme c group covalently per subunit.

In terms of biological role, cytochrome c' is the most widely occurring bacterial c-type cytochrome. Cytochromes c' are high-spin proteins and the heme has no sixth ligand. Their exact function is not known. The polypeptide is Cytochrome c' (Rhodospirillum rubrum (strain ATCC 11170 / ATH 1.1.1 / DSM 467 / LMG 4362 / NCIMB 8255 / S1)).